The chain runs to 413 residues: Serine hydroxymethyltransferase (413 aa).

(6S)-5,6,7,8-tetrahydrofolate contacts are provided by residues Leu-117 and 121–123 (GHL). Lys-226 is modified (N6-(pyridoxal phosphate)lysine). Residues Glu-239 and 349–351 (SPF) contribute to the (6S)-5,6,7,8-tetrahydrofolate site.

The protein belongs to the SHMT family. As to quaternary structure, homodimer. Requires pyridoxal 5'-phosphate as cofactor.

Its subcellular location is the cytoplasm. The enzyme catalyses (6R)-5,10-methylene-5,6,7,8-tetrahydrofolate + glycine + H2O = (6S)-5,6,7,8-tetrahydrofolate + L-serine. The protein operates within one-carbon metabolism; tetrahydrofolate interconversion. It participates in amino-acid biosynthesis; glycine biosynthesis; glycine from L-serine: step 1/1. Catalyzes the reversible interconversion of serine and glycine with tetrahydrofolate (THF) serving as the one-carbon carrier. This reaction serves as the major source of one-carbon groups required for the biosynthesis of purines, thymidylate, methionine, and other important biomolecules. Also exhibits THF-independent aldolase activity toward beta-hydroxyamino acids, producing glycine and aldehydes, via a retro-aldol mechanism. In Bacillus cereus (strain AH820), this protein is Serine hydroxymethyltransferase.